The chain runs to 118 residues: Small ribosomal subunit protein uS13 (118 aa).

The interval 94 to 118 (GLPVRGQRTKTNARTRKGPRKPIKK) is disordered.

This sequence belongs to the universal ribosomal protein uS13 family. As to quaternary structure, part of the 30S ribosomal subunit. Forms a loose heterodimer with protein S19. Forms two bridges to the 50S subunit in the 70S ribosome.

Its function is as follows. Located at the top of the head of the 30S subunit, it contacts several helices of the 16S rRNA. In the 70S ribosome it contacts the 23S rRNA (bridge B1a) and protein L5 of the 50S subunit (bridge B1b), connecting the 2 subunits; these bridges are implicated in subunit movement. Contacts the tRNAs in the A and P-sites. This chain is Small ribosomal subunit protein uS13, found in Pasteurella multocida (strain Pm70).